The primary structure comprises 1220 residues: Plasma membrane calcium-transporting ATPase 1 (1220 aa).

The residue at position 2 (Gly-2) is an N-acetylglycine. The Cytoplasmic segment spans residues 2-105 (GDMANNSVAY…KTFLQLVWEA (104 aa)). Phosphoserine occurs at positions 8 and 17. Residues 106 to 126 (LQDVTLIILEIAAIVSLGLSF) traverse the membrane as a helical segment. Topologically, residues 127 to 154 (YQPPEGDNALCGEVSVGEEEGEGETGWI) are extracellular. Residues 155–175 (EGAAILLSVVCVVLVTAFNDW) form a helical membrane-spanning segment. Topologically, residues 176–366 (SKEKQFRGLQ…KEKSVLQGKL (191 aa)) are cytoplasmic. The disordered stretch occupies residues 297–356 (EEEKKDEKKKEKKNKKQDGAIENRNKAKAQDGAAMEMQPLKSEEGGDGDEKDKKKANLPK). Composition is skewed to basic and acidic residues over residues 312 to 325 (KQDGAIENRNKAKA) and 337 to 356 (KSEEGGDGDEKDKKKANLPK). A Phosphoserine modification is found at Ser-338. The helical transmembrane segment at 367 to 386 (TKLAVQIGKAGLLMSAITVI) threads the bilayer. Residues 387–418 (ILVLYFVIDTFWVQKRPWLAECTPIYIQYFVK) lie on the Extracellular side of the membrane. A helical membrane pass occupies residues 419–439 (FFIIGVTVLVVAVPEGLPLAV). Residues 440–855 (TISLAYSVKK…RNVYDSISKF (416 aa)) lie on the Cytoplasmic side of the membrane. The active-site 4-aspartylphosphate intermediate is Asp-475. The Mg(2+) site is built by Asp-475, Thr-477, Asp-797, and Asp-801. Residues 856–876 (LQFQLTVNVVAVIVAFTGACI) traverse the membrane as a helical segment. At 877–882 (TQDSPL) the chain is on the extracellular side. Residues 883 to 903 (KAVQMLWVNLIMDTLASLALA) form a helical membrane-spanning segment. At 904–927 (TEPPTESLLLRKPYGRNKPLISRT) the chain is on the cytoplasmic side. The helical transmembrane segment at 928 to 948 (MMKNILGHAFYQLVVVFTLLF) threads the bilayer. At 949–971 (AGEKFFDIDSGRNAPLHAPPSEH) the chain is on the extracellular side. A helical membrane pass occupies residues 972–991 (YTIVFNTFVLMQLFNEINAR). At 992–1005 (KIHGERNVFEGIFN) the chain is on the cytoplasmic side. A helical transmembrane segment spans residues 1006 to 1027 (NAIFCTIVLGTFVVQIIIVQFG). Residues 1028–1039 (GKPFSCSELSIE) are Extracellular-facing. The chain crosses the membrane as a helical span at residues 1040–1060 (QWLWSIFLGMGTLLWGQLIST). Residues 1061-1220 (IPTSRLKFLK…SPLHSLETSL (160 aa)) are Cytoplasmic-facing. Positions 1100–1117 (LRRGQILWFRGLNRIQTQ) are calmodulin-binding subdomain A. Thr-1116 carries the phosphothreonine; by PKC modification. The tract at residues 1118–1127 (IRVVNAFRSS) is calmodulin-binding subdomain B. The interval 1118-1220 (IRVVNAFRSS…SPLHSLETSL (103 aa)) is required for basolateral membrane targeting. A phosphoserine mark is found at Ser-1140 and Ser-1155. The interval 1160 to 1220 (PLIDDTDAED…SPLHSLETSL (61 aa)) is disordered. Thr-1165 bears the Phosphothreonine mark. Ser-1178 and Ser-1182 each carry phosphoserine. Positions 1200 to 1220 (MNKSATSSSPGSPLHSLETSL) are enriched in polar residues.

Belongs to the cation transport ATPase (P-type) (TC 3.A.3) family. Type IIB subfamily. Monomer. Dimer. Oligomer. Calmodulin binding. Interacts with PDZD11. Interacts with SLC35G1 and STIM1. Interacts with YWHAE; interacts with the monomeric and dimeric forms of the YWHAE but prefer the monomer form; this interaction inhibits calcium-transporting ATPase activity. Interacts with NPTN; this interaction stabilizes ATP2B1 and increases ATPase activity; this interaction controls T cell calcium homeostasis following T cell activation. Interacts with EPB41; regulates small intestinal calcium absorption through regulation of membrane expression of ATP2B1.

The protein resides in the cell membrane. It is found in the basolateral cell membrane. It localises to the synapse. The protein localises to the presynaptic cell membrane. Its subcellular location is the cytoplasmic vesicle. The protein resides in the secretory vesicle. It is found in the synaptic vesicle membrane. The enzyme catalyses Ca(2+)(in) + ATP + H2O = Ca(2+)(out) + ADP + phosphate + H(+). Catalyzes the hydrolysis of ATP coupled with the transport of calcium from the cytoplasm to the extracellular space thereby maintaining intracellular calcium homeostasis. Plays a role in blood pressure regulation through regulation of intracellular calcium concentration and nitric oxide production leading to regulation of vascular smooth muscle cells vasoconstriction. Positively regulates bone mineralization through absorption of calcium from the intestine. Plays dual roles in osteoclast differentiation and survival by regulating RANKL-induced calcium oscillations in preosteoclasts and mediating calcium extrusion in mature osteoclasts. Regulates insulin sensitivity through calcium/calmodulin signaling pathway by regulating AKT1 activation and NOS3 activation in endothelial cells. May play a role in synaptic transmission by modulating calcium and proton dynamics at the synaptic vesicles. This is Plasma membrane calcium-transporting ATPase 1 from Sus scrofa (Pig).